A 550-amino-acid chain; its full sequence is Dihydroxy-acid dehydratase (550 aa).

Position 81 (Asp-81) interacts with Mg(2+). A [2Fe-2S] cluster-binding site is contributed by Cys-122. Mg(2+) contacts are provided by Asp-123 and Lys-124. Lys-124 carries the N6-carboxylysine modification. Cys-194 provides a ligand contact to [2Fe-2S] cluster. Glu-442 is a binding site for Mg(2+). Ser-467 (proton acceptor) is an active-site residue.

Belongs to the IlvD/Edd family. Homodimer. [2Fe-2S] cluster serves as cofactor. Requires Mg(2+) as cofactor.

It catalyses the reaction (2R)-2,3-dihydroxy-3-methylbutanoate = 3-methyl-2-oxobutanoate + H2O. The catalysed reaction is (2R,3R)-2,3-dihydroxy-3-methylpentanoate = (S)-3-methyl-2-oxopentanoate + H2O. The protein operates within amino-acid biosynthesis; L-isoleucine biosynthesis; L-isoleucine from 2-oxobutanoate: step 3/4. It participates in amino-acid biosynthesis; L-valine biosynthesis; L-valine from pyruvate: step 3/4. In terms of biological role, functions in the biosynthesis of branched-chain amino acids. Catalyzes the dehydration of (2R,3R)-2,3-dihydroxy-3-methylpentanoate (2,3-dihydroxy-3-methylvalerate) into 2-oxo-3-methylpentanoate (2-oxo-3-methylvalerate) and of (2R)-2,3-dihydroxy-3-methylbutanoate (2,3-dihydroxyisovalerate) into 2-oxo-3-methylbutanoate (2-oxoisovalerate), the penultimate precursor to L-isoleucine and L-valine, respectively. In Methanoregula boonei (strain DSM 21154 / JCM 14090 / 6A8), this protein is Dihydroxy-acid dehydratase.